The following is a 350-amino-acid chain: Putative deoxyribonuclease-2 (350 aa).

The protein belongs to the DNase II family.

This Burkholderia thailandensis (strain ATCC 700388 / DSM 13276 / CCUG 48851 / CIP 106301 / E264) protein is Putative deoxyribonuclease-2.